Here is a 95-residue protein sequence, read N- to C-terminus: F(1)-ATPase inhibitor IF(1), mitochondrial (95 aa).

The transit peptide at 1-25 (MLRTTVSKLARPTVSRAFATTSRAL) directs the protein to the mitochondrion. Disordered regions lie at residues 20–48 (TTSRALAGETGAPPKTGGPGDAFQRREKA) and 76–95 (LKTLSDHIDEITREQGGERN).

This sequence belongs to the ATPase inhibitor family. Associates with the mitochondrial small ribosomal subunit (mt-SSU). IF(1) coiled-coil forms a helical bundle with the C-terminal extension of uS17m and also binds to mS27 in the mtSSU tail. Since the C-terminal extension of uS17m stabilizing the IF(1) on the mt-SSU is specific to N.crassa, IF(1) binding might also be specific.

Its subcellular location is the mitochondrion. Functionally, endogenous F(1)F(0)-ATPase inhibitor limiting ATP depletion when the mitochondrial membrane potential falls below a threshold and the F(1)F(0)-ATP synthase starts hydrolyzing ATP to pump protons out of the mitochondrial matrix. Required to avoid the consumption of cellular ATP when the F(1)F(0)-ATP synthase enzyme acts as an ATP hydrolase. Functions through inserting its N-terminal part into the catalytically active F1-ATPase, thereby blocking its rotational movement and subsequently the ATP hydrolase activity. This chain is F(1)-ATPase inhibitor IF(1), mitochondrial (inh1), found in Neurospora crassa (strain ATCC 24698 / 74-OR23-1A / CBS 708.71 / DSM 1257 / FGSC 987).